The primary structure comprises 24 residues: Neurotoxin-2 (24 aa).

An LCN-type CS-alpha/beta domain is found at 1 to 24; the sequence is EDGYLLNRDTGCKVSCGTCRYCND.

The protein belongs to the long (4 C-C) scorpion toxin superfamily. Sodium channel inhibitor family. Alpha subfamily. Expressed by the venom gland.

Its subcellular location is the secreted. Its function is as follows. Binds to sodium channels (Nav) and inhibits the inactivation of the activated channels, thereby blocking neuronal transmission. This toxin is active against mammals. This Hottentotta tamulus (Eastern Indian scorpion) protein is Neurotoxin-2.